A 356-amino-acid chain; its full sequence is 3-dehydroquinate synthase (356 aa).

Residues glutamate 71–lysine 76, glycine 105–aspartate 109, threonine 129–serine 130, lysine 142, and lysine 151 each bind NAD(+). Positions 184, 247, and 264 each coordinate Zn(2+).

Belongs to the sugar phosphate cyclases superfamily. Dehydroquinate synthase family. The cofactor is Co(2+). It depends on Zn(2+) as a cofactor. NAD(+) is required as a cofactor.

It is found in the cytoplasm. It catalyses the reaction 7-phospho-2-dehydro-3-deoxy-D-arabino-heptonate = 3-dehydroquinate + phosphate. Its pathway is metabolic intermediate biosynthesis; chorismate biosynthesis; chorismate from D-erythrose 4-phosphate and phosphoenolpyruvate: step 2/7. Its function is as follows. Catalyzes the conversion of 3-deoxy-D-arabino-heptulosonate 7-phosphate (DAHP) to dehydroquinate (DHQ). In Lactococcus lactis subsp. cremoris (strain MG1363), this protein is 3-dehydroquinate synthase.